A 396-amino-acid polypeptide reads, in one-letter code: S-adenosylmethionine synthase (396 aa).

Glu11 provides a ligand contact to Mg(2+). His17 provides a ligand contact to ATP. Glu45 contacts K(+). L-methionine contacts are provided by Glu58 and Gln101. ATP is bound by residues 169–171, 237–240, Asp248, 254–255, Ala271, Lys275, and Lys279; these read DGK, SGRF, and RK. Asp248 contacts L-methionine. Lys279 is a binding site for L-methionine.

This sequence belongs to the AdoMet synthase family. In terms of assembly, homotetramer. It depends on Mn(2+) as a cofactor. The cofactor is Mg(2+). Requires Co(2+) as cofactor. K(+) is required as a cofactor.

Its subcellular location is the cytoplasm. It carries out the reaction L-methionine + ATP + H2O = S-adenosyl-L-methionine + phosphate + diphosphate. The protein operates within amino-acid biosynthesis; S-adenosyl-L-methionine biosynthesis; S-adenosyl-L-methionine from L-methionine: step 1/1. Catalyzes the formation of S-adenosylmethionine from methionine and ATP. The reaction comprises two steps that are both catalyzed by the same enzyme: formation of S-adenosylmethionine (AdoMet) and triphosphate, and subsequent hydrolysis of the triphosphate. This chain is S-adenosylmethionine synthase (SAMS), found in Medicago sativa subsp. falcata (Sickle medic).